The following is a 635-amino-acid chain: Chaperone protein HtpG (635 aa).

The interval 1-337 (MELKMHNVQE…SPDLPLNISR (337 aa)) is a; substrate-binding. The tract at residues 338 to 556 (ETLQNNRVVE…EGAMDLRMER (219 aa)) is b. The tract at residues 557–635 (FLREQKQLNY…LNNLLGKISV (79 aa)) is c.

This sequence belongs to the heat shock protein 90 family. As to quaternary structure, homodimer.

It localises to the cytoplasm. Molecular chaperone. Has ATPase activity. The sequence is that of Chaperone protein HtpG from Wolbachia pipientis wMel.